The primary structure comprises 367 residues: Popeye domain-containing protein 2 (367 aa).

Residue Asn4 is glycosylated (N-linked (GlcNAc...) asparagine). The next 2 helical transmembrane spans lie at 36-56 and 77-97; these read FLLMGFMAGSGVYGCFYLFGI and IVLWNVLLTVACLLQLAQLVY. Disordered stretches follow at residues 273–292 and 312–367; these read PSASDGEPESEKDDEEALEA and APPA…TPEL. The segment covering 278–290 has biased composition (acidic residues); sequence GEPESEKDDEEAL. The span at 344 to 356 shows a compositional bias: polar residues; the sequence is PLQNSSQVMSRSQ. An N-linked (GlcNAc...) asparagine glycan is attached at Asn347. Thr364 carries the phosphothreonine modification.

It belongs to the popeye family. As to expression, expressed in the developing and adult heart, with high expression levels in the sinus and atrioventricular nodes. Also expressed in the bladder and skeletal muscle.

Its subcellular location is the membrane. The protein resides in the cell membrane. It localises to the sarcolemma. Its function is as follows. Important for the maintenance of cardiac function. Plays a regulatory function in heart rate dynamics mediated, at least in part, through cAMP-binding and, probably, by increasing cell surface expression of the potassium channel KCNK2 and enhancing current density. The chain is Popeye domain-containing protein 2 (Popdc2) from Mus musculus (Mouse).